The chain runs to 154 residues: S-protein homolog 12 (154 aa).

An N-terminal signal peptide occupies residues 1–30 (MGTNKIPKTLNGNLVLILIITIMMVTHSHG).

The protein belongs to the plant self-incompatibility (S1) protein family.

It is found in the secreted. This is S-protein homolog 12 from Arabidopsis thaliana (Mouse-ear cress).